We begin with the raw amino-acid sequence, 176 residues long: Inorganic pyrophosphatase (176 aa).

Substrate-binding residues include Lys31, Arg45, and Tyr57. Mg(2+) is bound by residues Asp67, Asp72, and Asp104. Position 142 (Tyr142) interacts with substrate.

Belongs to the PPase family. As to quaternary structure, homohexamer. The cofactor is Mg(2+).

Its subcellular location is the cytoplasm. It carries out the reaction diphosphate + H2O = 2 phosphate + H(+). Its function is as follows. Catalyzes the hydrolysis of inorganic pyrophosphate (PPi) forming two phosphate ions. In Haemophilus influenzae (strain ATCC 51907 / DSM 11121 / KW20 / Rd), this protein is Inorganic pyrophosphatase.